Here is a 509-residue protein sequence, read N- to C-terminus: Maturase K (509 aa).

This sequence belongs to the intron maturase 2 family. MatK subfamily.

The protein localises to the plastid. The protein resides in the chloroplast. Functionally, usually encoded in the trnK tRNA gene intron. Probably assists in splicing its own and other chloroplast group II introns. The polypeptide is Maturase K (Banksia cuneata (Quairading banksia)).